Reading from the N-terminus, the 625-residue chain is Baeyer-Villiger monooxygenase ATR8 (625 aa).

FAD contacts are provided by residues Asp112, 120-123 (TWYW), Asp132, and Tyr138. 130–132 (QCD) contributes to the NADP(+) binding site. Residues 266 to 272 (TGATAIQ), 289 to 290 (RT), and 405 to 406 (KR) contribute to the NADP(+) site.

This sequence belongs to the FAD-binding monooxygenase family. The cofactor is FAD.

It participates in mycotoxin biosynthesis. In terms of biological role, baeyer-Villiger monooxygenase; part of the core atranone cluster (CAC) which products are predicted to catalyze most or all steps of mycotoxin atranone synthesis, starting from geranylgeranyl pyrophosphate (GGPP). The initial cyclization of GGPP to dolabellane is probably performed by the terpene cyclase ATR13. The Baeyer-Villiger oxidation near the end of the atranone synthesis, which converts atranones D and E to atranones F and G is predicted to be catalyzed by the monooxygenase ATR8. Of the CAC's other predicted gene products, the reducing PKS ATR6 might synthesize a polyketide chain. This polyketide is probably transferred onto the atranone backbone by the polyketide transferase ATR5. Other predicted CAC products include 4 oxygenases (ATR2, ATR3, ATR4, and ATR14), 3 short-chain reductases (ATR7, ATR9, and ATR10), and a methyltransferase (ATR12). These may all be involved in the various steps of atranone biosynthesis, although their specific roles must await experimental determination. The polypeptide is Baeyer-Villiger monooxygenase ATR8 (Stachybotrys chlorohalonatus (strain IBT 40285)).